The sequence spans 140 residues: Holo-[acyl-carrier-protein] synthase (140 aa).

Mg(2+) contacts are provided by D7 and E58.

Belongs to the P-Pant transferase superfamily. AcpS family. Requires Mg(2+) as cofactor.

It localises to the cytoplasm. It carries out the reaction apo-[ACP] + CoA = holo-[ACP] + adenosine 3',5'-bisphosphate + H(+). Functionally, transfers the 4'-phosphopantetheine moiety from coenzyme A to a Ser of acyl-carrier-protein. This chain is Holo-[acyl-carrier-protein] synthase, found in Chloroflexus aggregans (strain MD-66 / DSM 9485).